The primary structure comprises 297 residues: ATP synthase gamma chain (297 aa).

It belongs to the ATPase gamma chain family. F-type ATPases have 2 components, CF(1) - the catalytic core - and CF(0) - the membrane proton channel. CF(1) has five subunits: alpha(3), beta(3), gamma(1), delta(1), epsilon(1). CF(0) has three main subunits: a, b and c.

It localises to the cell membrane. Functionally, produces ATP from ADP in the presence of a proton gradient across the membrane. The gamma chain is believed to be important in regulating ATPase activity and the flow of protons through the CF(0) complex. This chain is ATP synthase gamma chain, found in Arthrobacter sp. (strain FB24).